The primary structure comprises 188 residues: Putative manganese efflux pump MntP (188 aa).

A run of 6 helical transmembrane segments spans residues 3–23, 39–59, 65–85, 110–130, 131–151, and 167–187; these read LFSL…VSIC, AGLY…LLGV, ITDY…VNML, LGFA…FLSV, DIYS…IIGV, and ILGG…HTLF.

This sequence belongs to the MntP (TC 9.B.29) family.

Its subcellular location is the cell inner membrane. In terms of biological role, probably functions as a manganese efflux pump. The sequence is that of Putative manganese efflux pump MntP from Mannheimia succiniciproducens (strain KCTC 0769BP / MBEL55E).